A 741-amino-acid polypeptide reads, in one-letter code: MFYTFNAVMTDVVSAGRPARGQSTTTRSRNTQQSAPTSQNFRACRRCRQHRIKCSEKPCEPCRANNSKCVWTEEKPTAAVLTPISPANLAANRPMMAPAAGSTITKPIASHYASPTYTDGEDGGGEPWPLQHPCSCAQHPNTPNSCPSQSGDIRQQQIPCSQHASPASNASKTFHQFLEGLGMAVTAEEGELHQFPPLPSAEEGKTSTAAAGLLPSAPTASETLNWDGQLYFVRLFWMSLAPLFPIMPESEFEALYAADGPYLLGQRTIEGALINGMTALGIQCAEATGSGARILSCSPTAASRSSIEYFRRCRDVLRDQDTSTTTCVHTIRCYILLTLYHLQANQLEKAYYLAGLGVRRAHMGRFHLTPAAHSSARVADDRIRVWWLLSWLDVYCSLQLGRPAAVQRSSNPCPPPSSPPMRFTPMHADVVSRKEASLDNYRFVLSKLTMIVVEALDDVPVFQSLEEMHGSSTAGQSMARLSETIRQLETALDELPEQLLTRHGSRTPTNNGQTHRSRPTCSTMPHTNRQVTSSASSAALTVGLPDWLQRQRLILELHYLDACLVLQRPFVLWKQICSSDASITKHAESAFSRACSVLSMLHSIYSRSDILDRLTMVLPFIWNAIITIAAYVFVGSADDDKKTQLLKAMNNALAILEPLARINPDSLKVYQISQALAAELREASGGTDVVAMPPPPSAATSTSTTFTDDLFKSTFTGSLDLDEFLNDEVTMTDDFSELYSF.

Residues 16 to 39 (GRPARGQSTTTRSRNTQQSAPTSQ) form a disordered region. Positions 20–34 (RGQSTTTRSRNTQQS) are enriched in low complexity. Positions 44-69 (CRRCRQHRIKCSEKPCEPCRANNSKC) form a DNA-binding region, zn(2)-C6 fungal-type. A disordered region spans residues 139–167 (HPNTPNSCPSQSGDIRQQQIPCSQHASPA). A coiled-coil region spans residues 473–500 (TAGQSMARLSETIRQLETALDELPEQLL). The disordered stretch occupies residues 501–528 (TRHGSRTPTNNGQTHRSRPTCSTMPHTN). Polar residues predominate over residues 506–528 (RTPTNNGQTHRSRPTCSTMPHTN).

It is found in the nucleus. Its function is as follows. Transcription factor involved in regulation of gene cluster that mediates the biosynthesis of oosporein, a metabolite required for fungal virulence that acts by evading host immunity to facilitate fungal multiplication in insects. Binds oosporein cluster genes at a conserved 5'-CGGA-3' motif with the exception of OpS5. The presence of this motif in the OpS3 promoter would suggest the formation of a positive feedback loop for self-activation. The polypeptide is Oosporein cluster regulator OpS3 (Beauveria bassiana (strain ARSEF 2860) (White muscardine disease fungus)).